The following is a 934-amino-acid chain: ATP-dependent RNA helicase dbp-10 (934 aa).

Positions 21–43 (LFNNDSDFEDNSSKHHTKKGAVT) are disordered. Positions 99 to 127 (GGFQAMGLNAHLLRAITRKGFSVPTPIQR) match the Q motif motif. The region spanning 130–302 (IPLILERKDV…RAGLQEPSLV (173 aa)) is the Helicase ATP-binding domain. An ATP-binding site is contributed by 143–150 (ARTGSGKT). The DEAD box signature appears at 250–253 (DEAD). Disordered regions lie at residues 343 to 370 (GPPE…NPKE), 613 to 722 (ELGP…FQDP), and 851 to 934 (GAQP…RQKR). A Helicase C-terminal domain is found at 359–513 (KRKREYRPNP…KNPSFAADVV (155 aa)). 2 stretches are compositionally biased toward acidic residues: residues 644-654 (DEDDEDVDMED) and 662-700 (EETN…DSEM). Over residues 864–926 (EKAPKDADKF…VAEKKREKNA (63 aa)) the composition is skewed to basic and acidic residues.

Belongs to the DEAD box helicase family. DDX54/DBP10 subfamily.

The protein resides in the nucleus. It localises to the nucleolus. The catalysed reaction is ATP + H2O = ADP + phosphate + H(+). Its function is as follows. ATP-binding RNA helicase involved in the biogenesis of 60S ribosomal subunits and is required for the normal formation of 25S and 5.8S rRNAs. In Neurospora crassa (strain ATCC 24698 / 74-OR23-1A / CBS 708.71 / DSM 1257 / FGSC 987), this protein is ATP-dependent RNA helicase dbp-10 (dbp-10).